The chain runs to 1354 residues: High molecular weight rhoptry protein 2 (1354 aa).

Positions 1–20 (MVKLSGIILLSLVWLKLNNS) are cleaved as a signal peptide. Cystine bridges form between Cys50–Cys75 and Cys220–Cys227. Residues 716–736 (LIFAAYMLTLVFFIESQIDIS) traverse the membrane as a helical segment. 3 disulfides stabilise this stretch: Cys768–Cys828, Cys848–Cys889, and Cys924–Cys1011.

As to quaternary structure, component of the RhopH complex. RhopH complex is composed of CLAG3.1/CLAG3.2, RhopH2 and RhopH3 with a 1:1:1 subunit stoichiometry. Interacts with CLAG3.1/CLAG3.2.

It is found in the host cell membrane. Its subcellular location is the parasitophorous vacuole membrane. The protein localises to the host cytoplasm. The protein resides in the cytoplasm. It localises to the cytoplasmic vesicle. It is found in the secretory vesicle. Its subcellular location is the rhoptry. In terms of biological role, participates in the formation of new permeability pathways in Plasmodium-infected erythrocytes enabling the uptake of nutrients from the blood plasma. Required for maintaining invasion capacity of merozoites. Required for parasite growth and proliferation. This Plasmodium berghei (strain Anka) protein is High molecular weight rhoptry protein 2.